A 257-amino-acid polypeptide reads, in one-letter code: Thiazole synthase (257 aa).

Lysine 100 serves as the catalytic Schiff-base intermediate with DXP. 1-deoxy-D-xylulose 5-phosphate-binding positions include glycine 161, 187–188, and 209–210; these read AG and NT.

Belongs to the ThiG family. Homotetramer. Forms heterodimers with either ThiH or ThiS.

It is found in the cytoplasm. The enzyme catalyses [ThiS sulfur-carrier protein]-C-terminal-Gly-aminoethanethioate + 2-iminoacetate + 1-deoxy-D-xylulose 5-phosphate = [ThiS sulfur-carrier protein]-C-terminal Gly-Gly + 2-[(2R,5Z)-2-carboxy-4-methylthiazol-5(2H)-ylidene]ethyl phosphate + 2 H2O + H(+). It participates in cofactor biosynthesis; thiamine diphosphate biosynthesis. Functionally, catalyzes the rearrangement of 1-deoxy-D-xylulose 5-phosphate (DXP) to produce the thiazole phosphate moiety of thiamine. Sulfur is provided by the thiocarboxylate moiety of the carrier protein ThiS. In vitro, sulfur can be provided by H(2)S. The protein is Thiazole synthase of Zymomonas mobilis subsp. mobilis (strain ATCC 31821 / ZM4 / CP4).